A 456-amino-acid polypeptide reads, in one-letter code: Ezy-1 protein (456 aa).

A signal peptide spans 1–28; it reads MQLSSSLRSARSAAASSGCALASRPVVA. Disordered regions lie at residues 167 to 189, 273 to 310, and 414 to 456; these read SDGG…DGDG, FTGK…GGSG, and QPAG…SPNM. Acidic residues predominate over residues 281 to 293; the sequence is AEGDDGEDEEEGE. The segment covering 418 to 428 has biased composition (basic and acidic residues); the sequence is DGHEPEPKRPE.

This is Ezy-1 protein (Ezy-1) from Chlamydomonas reinhardtii (Chlamydomonas smithii).